Reading from the N-terminus, the 297-residue chain is uncharacterized protein (297 aa).

Positions 128–156 form a coiled coil; it reads RGVIVEQESEAAAEKDELESLAKVLESDF.

This is an uncharacterized protein from Bacillus subtilis (strain 168).